The primary structure comprises 209 residues: Imidazole glycerol phosphate synthase subunit HisH (209 aa).

The Glutamine amidotransferase type-1 domain occupies methionine 1–serine 205. The active-site Nucleophile is cysteine 79. Active-site residues include histidine 180 and glutamate 182.

Heterodimer of HisH and HisF.

It is found in the cytoplasm. The catalysed reaction is 5-[(5-phospho-1-deoxy-D-ribulos-1-ylimino)methylamino]-1-(5-phospho-beta-D-ribosyl)imidazole-4-carboxamide + L-glutamine = D-erythro-1-(imidazol-4-yl)glycerol 3-phosphate + 5-amino-1-(5-phospho-beta-D-ribosyl)imidazole-4-carboxamide + L-glutamate + H(+). The enzyme catalyses L-glutamine + H2O = L-glutamate + NH4(+). It functions in the pathway amino-acid biosynthesis; L-histidine biosynthesis; L-histidine from 5-phospho-alpha-D-ribose 1-diphosphate: step 5/9. Its function is as follows. IGPS catalyzes the conversion of PRFAR and glutamine to IGP, AICAR and glutamate. The HisH subunit catalyzes the hydrolysis of glutamine to glutamate and ammonia as part of the synthesis of IGP and AICAR. The resulting ammonia molecule is channeled to the active site of HisF. This chain is Imidazole glycerol phosphate synthase subunit HisH, found in Bacillus thuringiensis subsp. konkukian (strain 97-27).